Here is a 222-residue protein sequence, read N- to C-terminus: Probable transaldolase 2 (222 aa).

The active-site Schiff-base intermediate with substrate is Lys-90.

The protein belongs to the transaldolase family. Type 3B subfamily.

The protein resides in the cytoplasm. The catalysed reaction is D-sedoheptulose 7-phosphate + D-glyceraldehyde 3-phosphate = D-erythrose 4-phosphate + beta-D-fructose 6-phosphate. It functions in the pathway carbohydrate degradation; pentose phosphate pathway; D-glyceraldehyde 3-phosphate and beta-D-fructose 6-phosphate from D-ribose 5-phosphate and D-xylulose 5-phosphate (non-oxidative stage): step 2/3. In terms of biological role, transaldolase is important for the balance of metabolites in the pentose-phosphate pathway. This is Probable transaldolase 2 from Bacillus anthracis.